Here is a 66-residue protein sequence, read N- to C-terminus: Beta-toxin Cbo4 (66 aa).

The LCN-type CS-alpha/beta domain maps to 1 to 66 (KEGYIVDYHT…VWPLPNKRCK (66 aa)). Intrachain disulfides connect C12/C65, C16/C41, C25/C46, and C29/C48. Lysine amide is present on K66.

Belongs to the long (4 C-C) scorpion toxin superfamily. Sodium channel inhibitor family. Beta subfamily. Expressed by the venom gland.

The protein resides in the secreted. In terms of biological role, beta toxins bind voltage-independently at site-4 of sodium channels and shift the voltage of activation toward more negative potentials thereby affecting sodium channel activation and promoting spontaneous and repetitive firing. Is active on the human voltage-gated sodium channels Nav1.4/SCN4A, Nav1.5/SCN5A and Nav1.6/SCN8A when tested at 200 nM. In vivo, is toxic to mice when intraperitoneally injected. The sequence is that of Beta-toxin Cbo4 from Centruroides bonito (Scorpion).